The following is a 254-amino-acid chain: Ornithine decarboxylase antizyme (254 aa).

The protein belongs to the ODC antizyme family. In terms of assembly, interacts with ODC1 and thereby sterically blocks ODC homodimerization.

Its function is as follows. Ornithine decarboxylase (ODC) antizyme protein that negatively regulates ODC activity and intracellular polyamine biosynthesis and uptake in response to increased intracellular polyamine levels. Binds to ODC monomers, inhibiting the assembly of the functional ODC homodimer, and targets the monomers for ubiquitin-independent proteolytic destruction by the 26S proteasome. Required for cellular differentiation in neuronal and myogenic lineages during embryonic development. The polypeptide is Ornithine decarboxylase antizyme (Oda) (Drosophila melanogaster (Fruit fly)).